The chain runs to 378 residues: Signal recognition particle receptor FtsY (378 aa).

Residues 184–191, 266–270, and 330–333 contribute to the GTP site; these read GVNGTGKT, DTAGR, and TKLD.

The protein belongs to the GTP-binding SRP family. FtsY subfamily. As to quaternary structure, part of the signal recognition particle protein translocation system, which is composed of SRP and FtsY. SRP is a ribonucleoprotein composed of Ffh and a 4.5S RNA molecule.

Its subcellular location is the cell membrane. The protein resides in the cytoplasm. The catalysed reaction is GTP + H2O = GDP + phosphate + H(+). Functionally, involved in targeting and insertion of nascent membrane proteins into the cytoplasmic membrane. Acts as a receptor for the complex formed by the signal recognition particle (SRP) and the ribosome-nascent chain (RNC). Interaction with SRP-RNC leads to the transfer of the RNC complex to the Sec translocase for insertion into the membrane, the hydrolysis of GTP by both Ffh and FtsY, and the dissociation of the SRP-FtsY complex into the individual components. The chain is Signal recognition particle receptor FtsY from Buchnera aphidicola subsp. Acyrthosiphon pisum (strain APS) (Acyrthosiphon pisum symbiotic bacterium).